The chain runs to 700 residues: Chaperonin CPN60, mitochondrial (700 aa).

The transit peptide at Met1–Leu9 directs the protein to the mitochondrion. A disordered region spans residues Thr636 to Glu700. Residues Asp644–Glu700 are compositionally biased toward acidic residues.

This sequence belongs to the chaperonin (HSP60) family.

It localises to the mitochondrion matrix. In terms of biological role, implicated in mitochondrial protein import and macromolecular assembly. May facilitate the correct folding of imported proteins. May also prevent misfolding and promote the refolding and proper assembly of unfolded polypeptides generated under stress conditions in the mitochondrial matrix. In Plasmodium falciparum (isolate FCR-3 / Gambia), this protein is Chaperonin CPN60, mitochondrial.